A 386-amino-acid polypeptide reads, in one-letter code: Galactokinase (386 aa).

32–35 is a substrate binding site; that stretch reads EHTD. ATP-binding positions include serine 66 and 123–129; that span reads GASLSSS. Mg(2+)-binding residues include serine 129 and glutamate 161. Residue aspartate 173 is the Proton acceptor of the active site. Substrate is bound at residue tyrosine 223.

The protein belongs to the GHMP kinase family. GalK subfamily.

The protein localises to the cytoplasm. The enzyme catalyses alpha-D-galactose + ATP = alpha-D-galactose 1-phosphate + ADP + H(+). The protein operates within carbohydrate metabolism; galactose metabolism. Catalyzes the transfer of the gamma-phosphate of ATP to D-galactose to form alpha-D-galactose-1-phosphate (Gal-1-P). The sequence is that of Galactokinase from Staphylococcus saprophyticus subsp. saprophyticus (strain ATCC 15305 / DSM 20229 / NCIMB 8711 / NCTC 7292 / S-41).